Consider the following 193-residue polypeptide: Acyl-homoserine-lactone synthase (193 aa).

The protein belongs to the autoinducer synthase family.

The catalysed reaction is a fatty acyl-[ACP] + S-adenosyl-L-methionine = an N-acyl-L-homoserine lactone + S-methyl-5'-thioadenosine + holo-[ACP] + H(+). Its function is as follows. Required for the synthesis of OHHL (N-(3-oxohexanoyl)-L-homoserine lactone) also known as VAI or N-(beta-ketocaproyl)homoserine lactone or 3-oxo-N-(tetrahydro-2-oxo-3-furanyl)-hexanamide, an autoinducer molecule which binds to LuxR and thus acts in bioluminescence regulation. The chain is Acyl-homoserine-lactone synthase (luxI) from Aliivibrio fischeri (Vibrio fischeri).